A 216-amino-acid polypeptide reads, in one-letter code: 3-keto-L-gulonate-6-phosphate decarboxylase UlaD (216 aa).

D11 lines the substrate pocket. Mg(2+)-binding residues include E33 and D62. R192 lines the substrate pocket.

Belongs to the HPS/KGPDC family. KGPDC subfamily. As to quaternary structure, homodimer. The cofactor is Mg(2+).

The enzyme catalyses 3-dehydro-L-gulonate 6-phosphate + H(+) = L-xylulose 5-phosphate + CO2. Its pathway is cofactor degradation; L-ascorbate degradation; D-xylulose 5-phosphate from L-ascorbate: step 2/4. In terms of biological role, catalyzes the decarboxylation of 3-keto-L-gulonate-6-P into L-xylulose-5-P. Is involved in the anaerobic L-ascorbate utilization. This is 3-keto-L-gulonate-6-phosphate decarboxylase UlaD from Escherichia coli O139:H28 (strain E24377A / ETEC).